The following is a 328-amino-acid chain: Acyl-CoA wax alcohol acyltransferase 1 (328 aa).

A run of 2 helical transmembrane segments spans residues 12–32 (SLSL…VQPL) and 34–53 (ICLL…VWLL).

The protein belongs to the diacylglycerol acyltransferase family.

Its subcellular location is the endoplasmic reticulum membrane. The enzyme catalyses a long chain fatty alcohol + a fatty acyl-CoA = a wax ester + CoA. It carries out the reaction 1,2-di-(9Z-octadecenoyl)-sn-glycerol + (9Z)-octadecenoyl-CoA = 1,2,3-tri-(9Z-octadecenoyl)-glycerol + CoA. It catalyses the reaction hexadecan-1-ol + (9Z)-octadecenoyl-CoA = hexadecanyl (9Z)-octadecenoate + CoA. The catalysed reaction is decan-1-ol + (9Z)-octadecenoyl-CoA = 1-O-decyl-(9Z)-octadecenoate + CoA. The enzyme catalyses (9Z)-hexadecen-1-ol + (9Z)-octadecenoyl-CoA = 1-O-(9Z)-hexadecenyl (9Z)-octadecenoate + CoA. It carries out the reaction octadecan-1-ol + (9Z)-octadecenoyl-CoA = 1-O-octadecyl (9Z)-octadecenoate + CoA. It catalyses the reaction (9Z)-octadecen-1-ol + (9Z)-octadecenoyl-CoA = 1-O-(9Z)-octadecenyl (9Z)-octadecenoate + CoA. The catalysed reaction is hexadecan-1-ol + hexadecanoyl-CoA = hexadecanyl hexadecanoate + CoA. The enzyme catalyses hexadecan-1-ol + (9Z)-hexadecenoyl-CoA = 1-O-hexadecyl (9Z)-hexadecenoate + CoA. It carries out the reaction hexadecan-1-ol + octadecanoyl-CoA = hexadecanyl octadecanoate + CoA. It catalyses the reaction eicosan-1-ol + (9Z)-octadecenoyl-CoA = 1-O-eicosanyl (9Z)-octadecenoate + CoA. In terms of biological role, acyltransferase that catalyzes the formation of ester bonds between fatty alcohols and fatty acyl-CoAs to form wax monoesters. Shows a strong preference for decyl alcohol (C10), with less activity towards C16 and C18 alcohols. Shows a strong preference for saturated acyl-CoAs. In Mus musculus (Mouse), this protein is Acyl-CoA wax alcohol acyltransferase 1 (Awat1).